The chain runs to 499 residues: Probable cytosol aminopeptidase (499 aa).

Mn(2+) contacts are provided by lysine 269 and aspartate 274. Lysine 281 is a catalytic residue. Residues aspartate 292, aspartate 351, and glutamate 353 each contribute to the Mn(2+) site. Residue arginine 355 is part of the active site.

It belongs to the peptidase M17 family. The cofactor is Mn(2+).

Its subcellular location is the cytoplasm. It carries out the reaction Release of an N-terminal amino acid, Xaa-|-Yaa-, in which Xaa is preferably Leu, but may be other amino acids including Pro although not Arg or Lys, and Yaa may be Pro. Amino acid amides and methyl esters are also readily hydrolyzed, but rates on arylamides are exceedingly low.. The enzyme catalyses Release of an N-terminal amino acid, preferentially leucine, but not glutamic or aspartic acids.. Its function is as follows. Presumably involved in the processing and regular turnover of intracellular proteins. Catalyzes the removal of unsubstituted N-terminal amino acids from various peptides. The sequence is that of Probable cytosol aminopeptidase from Actinobacillus pleuropneumoniae serotype 7 (strain AP76).